Consider the following 256-residue polypeptide: POU domain class 2-associating factor 1 (256 aa).

The segment at 1–24 is disordered; sequence MLWQKSTAPEQAPAPPRPYQGVRV. The OCA domain maps to 16–38; that stretch reads PRPYQGVRVKEPVKELLRRKRGH.

The protein belongs to the POU2AF family. Interacts with POU2F1/OCT1 and POU2F2/OCT2; the interaction increases POU2F1 and POU2F2 transactivation activity. Ubiquitinated; mediated by SIAH1 or SIAH2 and leading to its subsequent proteasomal degradation. B-cell specific.

It localises to the nucleus. In terms of biological role, transcriptional coactivator that specifically associates with either POU2F1/OCT1 or POU2F2/OCT2. It boosts the POU2F1/OCT1 mediated promoter activity and to a lesser extent, that of POU2F2/OCT2. It recognizes the POU domains of POU2F1/OCT1 and POU2F2/OCT2. It is essential for the response of B-cells to antigens and required for the formation of germinal centers. Regulates IL6 expression in B cells as POU2F2/OCT2 coactivator. This is POU domain class 2-associating factor 1 from Mus musculus (Mouse).